A 208-amino-acid polypeptide reads, in one-letter code: Small ribosomal subunit protein uS4 (208 aa).

In terms of domain architecture, S4 RNA-binding spans 98 to 161 (QRLDNVVYRM…KNNPQIVRAI (64 aa)).

This sequence belongs to the universal ribosomal protein uS4 family. In terms of assembly, part of the 30S ribosomal subunit. Contacts protein S5. The interaction surface between S4 and S5 is involved in control of translational fidelity.

Functionally, one of the primary rRNA binding proteins, it binds directly to 16S rRNA where it nucleates assembly of the body of the 30S subunit. In terms of biological role, with S5 and S12 plays an important role in translational accuracy. The chain is Small ribosomal subunit protein uS4 from Campylobacter concisus (strain 13826).